The primary structure comprises 371 residues: MGELRGAHVPVLLERCLELLSPALDRTGQTGRTVYVDATLGLGGHAEAILTAHPRTMLVGLDRDTEALAHARVRLARFADRVHLEHAVYDELPDVLDRIGHPVVDGILFDLGVSSLQLDAPDRGFAYAQDAPLDMRMDQSRGVTAEEVVNSYSHPELARVLRVYGEEKFASRIASAIVRERDRAPITSSAQLAELVRQAIPAPARRTGGHPAKRTFQALRIEVNRELAALETALPAALDRLAIEGRMVVLSYHSLEDRLTKVALADRVRSKGPIDLPVELPGTGPTFRLLSRGAELPGEAEVAVNPRAASVRLRAAERLDPTQQQRQRTDRERYRRQVRAMHQPGTGSAVRRPVSGDDGTGTDEEGEGHDD.

S-adenosyl-L-methionine contacts are provided by residues 43 to 45, Asp-62, Leu-96, Asp-110, and Gln-117; that span reads GGH. The disordered stretch occupies residues 315-371; it reads AAERLDPTQQQRQRTDRERYRRQVRAMHQPGTGSAVRRPVSGDDGTGTDEEGEGHDD. The span at 360–371 shows a compositional bias: acidic residues; that stretch reads TGTDEEGEGHDD.

Belongs to the methyltransferase superfamily. RsmH family.

It is found in the cytoplasm. It catalyses the reaction cytidine(1402) in 16S rRNA + S-adenosyl-L-methionine = N(4)-methylcytidine(1402) in 16S rRNA + S-adenosyl-L-homocysteine + H(+). In terms of biological role, specifically methylates the N4 position of cytidine in position 1402 (C1402) of 16S rRNA. The polypeptide is Ribosomal RNA small subunit methyltransferase H (Salinispora tropica (strain ATCC BAA-916 / DSM 44818 / JCM 13857 / NBRC 105044 / CNB-440)).